The primary structure comprises 398 residues: MEEDDSYVPSDLTAEERQELENIRRRKQELLADIQRLKDEIAEVANEIENLGSTEERKNMQRNKQVAMGRKKFNMDPKKGIQFLIENDLLKNTCEDIAQFLYKGEGLNKTAIGDYLGERDEFNIQVLHAFVELHEFTDLNLVQALRQFLWSFRLPGEAQKIDRMMEAFAQRYCQCNNGVFQSTDTCYVLSFAIIMLNTSLHNPNVKDKPTVERFIAMNRGINDGGDLPEELLRNLYESIKNEPFKIPEDDGNDLTHTFFNPDREGWLLKLGGGRVKTWKRRWFILTDNCLYYFEYTTDKEPRGIIPLENLSIREVEDSKKPNCFELYIPDNKDQVIKACKTEADGRVVEGNHTVYRISAPTPEEKEEWIKCIKAAISRDPFYEMLAARKKKVSSTKRH.

Met-1 is modified (N-acetylmethionine). Positions 10 to 67 (SDLTAEERQELENIRRRKQELLADIQRLKDEIAEVANEIENLGSTEERKNMQRNKQVA) form a coiled coil. The SEC7 domain maps to 73–202 (FNMDPKKGIQ…IIMLNTSLHN (130 aa)). Residues 260–377 (NPDREGWLLK…WIKCIKAAIS (118 aa)) enclose the PH domain. Residues 269–277 (KLGGGRVKT), Arg-281, Tyr-292, Arg-302, and Asn-351 contribute to the a 1,2-diacyl-sn-glycero-3-phospho-(1D-myo-inositol-3,4,5-trisphosphate) site. A C-terminal autoinhibitory region region spans residues 388–396 (RKKKVSSTK).

Interacts with TRIM23 and CYTIP. Interacts (via coiled-coil domain) with FRMD4A (via coiled-coil domain). Interacts with FRMD4B. Found in a complex with PARD3, CYTH1 and FRMD4A. Interacts (via N-terminal domain) with INAVA (via N-terminal domain). Ubiquitinated by SCF(FBXW11) E3 ubiquitin-protein ligase complex. Ubiquitination induces proteasomal degradation.

Its subcellular location is the cell membrane. It is found in the cytoplasm. It localises to the cytosol. The protein localises to the cell junction. The protein resides in the tight junction. Its subcellular location is the adherens junction. In terms of biological role, promotes guanine-nucleotide exchange on ARF1, ARF5 and ARF6. Promotes the activation of ARF factors through replacement of GDP with GTP. Plays an important role in membrane trafficking, during junctional remodeling and epithelial polarization, through regulation of ARF6 activity. The sequence is that of Cytohesin-1 (CYTH1) from Chlorocebus aethiops (Green monkey).